We begin with the raw amino-acid sequence, 862 residues long: Short transient receptor potential channel 7 (862 aa).

A disordered region spans residues 1-21 (MLGSNTFKNMQRRHTTLREKG). At 1 to 351 (MLGSNTFKNM…GLRQQSIAVK (351 aa)) the chain is on the cytoplasmic side. The span at 10 to 21 (MQRRHTTLREKG) shows a compositional bias: basic residues. T15 bears the Phosphothreonine; by PKG/PRKG1 mark. ANK repeat units lie at residues 42-71 (PEEE…TLNF), 77-106 (MGQN…LARV), 108-134 (DALL…FAQG), and 163-192 (HDIT…RIER). A helical membrane pass occupies residues 352–372 (FLAVFGVSIGLPFLAIAYWIA). Over 373–383 (PCSKLGQTLRS) the chain is Extracellular. A helical membrane pass occupies residues 384–404 (PFMKFVAHAVSFTIFLGLLVV). At 405–465 (NASDRFEGVK…KEIWEEGPRE (61 aa)) the chain is on the cytoplasmic side. A helical membrane pass occupies residues 466–486 (YVLHLWNLLDFGMLSIFVASF). The Extracellular segment spans residues 487–537 (TARFMAFLKASEAQLYVDQYVQDVTLHNVSLPPEVAYFTYARDKWWPSDPQ). Residue N514 is glycosylated (N-linked (GlcNAc...) asparagine). A helical membrane pass occupies residues 538–558 (IISEGLYAIAVVLSFSRIAYI). At 559 to 581 (LPANESFGPLQISLGRTVKDIFK) the chain is on the cytoplasmic side. The helical transmembrane segment at 582–602 (FMVIFIMVFVAFMIGMFNLYS) threads the bilayer. Residues 603–651 (YYRGAKYNPAFTTVEESFKTLFWSIFGLSEVISVVLKYDHKFIENIGYV) are Extracellular-facing. A helical membrane pass occupies residues 652 to 672 (LYGVYNVTMVVVLLNMLIAMI). At 673–862 (NNSYQEIEED…HLRVNQGKDI (190 aa)) the chain is on the cytoplasmic side.

It belongs to the transient receptor (TC 1.A.4) family. STrpC subfamily. TRPC7 sub-subfamily. As to quaternary structure, interacts with MX1 and RNF24. Interacts (via ANK-repeat domains) with PRKG1. In terms of processing, phosphorylation by PRKG1 at Thr-15 negatively regulates TRPC7 activity.

The protein resides in the cell membrane. Its subcellular location is the nucleus envelope. The enzyme catalyses Ca(2+)(in) = Ca(2+)(out). Its function is as follows. Forms a receptor-activated non-selective calcium permeant cation channel. Probably is operated by a phosphatidylinositol second messenger system activated by receptor tyrosine kinases or G-protein coupled receptors. Activated by diacylglycerol (DAG). May also be activated by intracellular calcium store depletion. This chain is Short transient receptor potential channel 7 (Trpc7), found in Mus musculus (Mouse).